A 395-amino-acid chain; its full sequence is Hdr-like menaquinol oxidoreductase integral membrane subunit (395 aa).

The next 10 membrane-spanning stretches (helical) occupy residues 15–35, 57–77, 88–108, 126–146, 158–178, 196–216, 231–251, 274–294, 305–325, and 364–384; these read YFALVIILAAVTALGFYAYVL, IPYFIGLSAGSLIVSALAGVF, IAAYMAAAWIIAAILSIALDI, IFSWNAFLYSSYFVICSIYLL, FMAGLAVFWAVLVHSGTGAIY, FIVCAITSGLGLLLANLYFTF, LALIFAGLMMVLGYFLAVEGL, VFWSFWLLVIFGIAIPIIIVL, ITFAGILHAALVFAERFYLII, and IGLIAMVYLIFVVGVKLFALI.

The protein belongs to the NrfD family. In terms of assembly, consists of five subunits: an integral membrane subunit, a cytochrome b-like subunit, a cytochrome c subunit and two iron-sulfur subunits.

Its subcellular location is the cell membrane. Has menaquinol-oxidizing activity. HmeB subunit may function as a menaquinol-oxidizing site. HmeA, HmeB and HmeE subunits may together catalyze electron transfer from menaquinol to cytochrome c. In Archaeoglobus fulgidus (strain ATCC 49558 / DSM 4304 / JCM 9628 / NBRC 100126 / VC-16), this protein is Hdr-like menaquinol oxidoreductase integral membrane subunit (hmeB).